Here is a 912-residue protein sequence, read N- to C-terminus: uncharacterized protein (912 aa).

Composition is skewed to basic and acidic residues over residues 20-32 (IERLREQGRAEPA) and 39-67 (HEYEHTQGSRSHSSKDGSRKDRMSSEDKT). The interval 20-91 (IERLREQGRA…KPTLPQPETD (72 aa)) is disordered. A compositionally biased stretch (basic residues) spans 68-77 (RHKKLKHRSR).

This is an uncharacterized protein from Penicillium chrysogenum virus (isolate Caston/2003) (PcV).